Here is a 98-residue protein sequence, read N- to C-terminus: Small ribosomal subunit protein bS6 (98 aa).

This sequence belongs to the bacterial ribosomal protein bS6 family.

Functionally, binds together with bS18 to 16S ribosomal RNA. In Moorella thermoacetica (strain ATCC 39073 / JCM 9320), this protein is Small ribosomal subunit protein bS6.